The following is a 697-amino-acid chain: Tryptophan synthase (697 aa).

Positions 1–298 (MTEQIKKTFL…AVVEPINEMY (298 aa)) are tryptophan synthase alpha chain. Catalysis depends on proton acceptor residues E50 and D61. The tryptophan synthase beta chain stretch occupies residues 298–697 (YLPQKYGMFG…GPKIGWDLRF (400 aa)). K381 carries the post-translational modification N6-(pyridoxal phosphate)lysine.

The protein in the N-terminal section; belongs to the TrpA family. In the C-terminal section; belongs to the TrpB family. The cofactor is pyridoxal 5'-phosphate.

It carries out the reaction (1S,2R)-1-C-(indol-3-yl)glycerol 3-phosphate + L-serine = D-glyceraldehyde 3-phosphate + L-tryptophan + H2O. It participates in amino-acid biosynthesis; L-tryptophan biosynthesis; L-tryptophan from chorismate: step 5/5. The chain is Tryptophan synthase (trp2) from Schizosaccharomyces pombe (strain 972 / ATCC 24843) (Fission yeast).